The primary structure comprises 381 residues: ELMO domain-containing protein 3 (381 aa).

The tract at residues 1-31 is disordered; the sequence is MNEKSCSFHSKEELRDGQGERLSAGYSPSYD. Residues 9 to 19 show a composition bias toward basic and acidic residues; sequence HSKEELRDGQG. Positions 170-324 constitute an ELMO domain; sequence VHGRVLQTIY…ELEVLAKKSP (155 aa).

In terms of tissue distribution, both isoform 1 and isoform 6 are widely expressed.

The protein resides in the cell projection. It localises to the stereocilium. Its subcellular location is the kinocilium. It is found in the cytoplasm. The protein localises to the cytoskeleton. Functionally, acts as a GTPase-activating protein (GAP) for ARL2 with low specific activity. This is ELMO domain-containing protein 3 (ELMOD3) from Homo sapiens (Human).